The primary structure comprises 74 residues: uncharacterized protein (74 aa).

The tract at residues 39 to 74 (SSPQAPGTLKPRALVRPSPGPVQENHLSEAQFPPKL) is disordered.

This is an uncharacterized protein from Homo sapiens (Human).